The chain runs to 1176 residues: Serine/threonine-protein kinase pakF (1176 aa).

Composition is skewed to low complexity over residues 1 to 19 and 32 to 52; these read MSNL…ESSS and NLLN…SGSN. 2 disordered regions span residues 1-231 and 254-361; these read MSNL…HESR and LPST…KKTK. Pro residues predominate over residues 64–76; that stretch reads QLPPNYTPPPPPH. Residues 92-133 adopt a coiled-coil conformation; that stretch reads LNNENSDNNNNNNNNNNNNNNNNNNNNNNNNNNNEQLARTES. Low complexity-rich tracts occupy residues 93–125, 133–148, and 156–172; these read NNEN…NNNN, SSVS…SNSG, and SSNI…ETYS. Residues 173–197 show a composition bias toward polar residues; that stretch reads MSPNQTLNSNIDSSEQQHQDLSSSV. The segment covering 198-226 has biased composition (low complexity); the sequence is NNNNNNNNNNNNNNNNNNNNNNNNNNNNN. The segment covering 254-289 has biased composition (polar residues); it reads LPSTPTQQNVEIQTTNGGSSETSPNGLISPRPSNDQ. The span at 316 to 353 shows a compositional bias: low complexity; it reads SLSSSTTTPSTTSSLTSSPSSSSLAISSPNTTAATTTN. The CRIB domain occupies 370–383; that stretch reads ISVPYNVIHKMHVD. One can recognise a Protein kinase domain in the interval 394 to 646; sequence FILDEKLGDG…PIDLLCHPFL (253 aa). ATP contacts are provided by residues 400-408 and Lys423; that span reads LGDGAYGSV. The active-site Proton acceptor is Asp514. Disordered regions lie at residues 670-723, 753-885, 968-1083, and 1112-1176; these read IDDL…SDEL, QEEE…GNNL, HTTS…TGRA, and NSNS…NIKK. Low complexity-rich tracts occupy residues 682–693 and 710–720; these read SQSSSSSSPQSP and SIISPIPSSPS. 2 stretches are compositionally biased toward acidic residues: residues 767 to 789 and 813 to 844; these read DEQD…EDVD and DQDD…DEEI. The stretch at 812 to 873 forms a coiled coil; that stretch reads SDQDDEEEDE…NKKKNKKNNL (62 aa). A compositionally biased stretch (basic residues) spans 852-870; that stretch reads VRKKKNKSTKKSNKKKNKK. Polar residues-rich tracts occupy residues 873 to 884 and 968 to 985; these read LSTIGKSGSGNN and HTTS…ATNL. 3 stretches are compositionally biased toward low complexity: residues 991-1044, 1051-1066, and 1148-1176; these read SSSP…RPNS, NNSS…SSSS, and SSGS…NIKK.

It belongs to the protein kinase superfamily. STE Ser/Thr protein kinase family. STE20 subfamily. Requires Mg(2+) as cofactor.

It catalyses the reaction L-seryl-[protein] + ATP = O-phospho-L-seryl-[protein] + ADP + H(+). The enzyme catalyses L-threonyl-[protein] + ATP = O-phospho-L-threonyl-[protein] + ADP + H(+). This chain is Serine/threonine-protein kinase pakF, found in Dictyostelium discoideum (Social amoeba).